A 129-amino-acid polypeptide reads, in one-letter code: Type II secretion system protein I (129 aa).

Positions Met-1 to Gly-6 are cleaved as a propeptide — leader sequence. Residue Phe-7 is modified to N-methylphenylalanine. Residues Phe-7–Leu-27 form a helical membrane-spanning segment.

The protein belongs to the GSP I family. Type II secretion is composed of four main components: the outer membrane complex, the inner membrane complex, the cytoplasmic secretion ATPase and the periplasm-spanning pseudopilus. Forms the tip of the type II pseudopilus by interacting with XcpU, XcpW and XcpX. Interacts with core component XcpT. Post-translationally, cleaved by prepilin peptidase. In terms of processing, methylated by prepilin peptidase at the amino group of the N-terminal phenylalanine once the leader sequence is cleaved by prepilin peptidase.

Its subcellular location is the cell inner membrane. In terms of biological role, component of the type II secretion system required for the energy-dependent secretion of extracellular factors such as proteases and toxins from the periplasm. Part of the pseudopilus tip complex that is critical for the recognition and binding of secretion substrates. Type II pseudopilus confers increased bacterial adhesive capabilities. The chain is Type II secretion system protein I (xcpV) from Pseudomonas aeruginosa (strain ATCC 15692 / DSM 22644 / CIP 104116 / JCM 14847 / LMG 12228 / 1C / PRS 101 / PAO1).